We begin with the raw amino-acid sequence, 367 residues long: Alpha-2-HS-glycoprotein (367 aa).

The first 18 residues, 1–18 (MKSLVLLLCLAQLWGCHS), serve as a signal peptide directing secretion. The Cystatin fetuin-A-type 1 domain maps to 27-133 (YRQPNCDDPE…KFSVVYAKCD (107 aa)). 6 cysteine pairs are disulfide-bonded: Cys-32–Cys-358, Cys-89–Cys-100, Cys-114–Cys-132, Cys-146–Cys-149, Cys-208–Cys-219, and Cys-230–Cys-247. Residues Ser-134, Ser-135, and Ser-138 each carry the phosphoserine modification. The 112-residue stretch at 144–255 (KVCQDCPLLA…TCTVFQTQPV (112 aa)) folds into the Cystatin fetuin-A-type 2 domain. Residues Asn-156 and Asn-176 are each glycosylated (N-linked (GlcNAc...) asparagine). The disordered stretch occupies residues 254–301 (PVTSQPQPEGANETVPTPVVDPDAPPSPPLGAPGLPPAGSPPDSHVLL). The N-linked (GlcNAc...) asparagine glycan is linked to Asn-265. Positions 276–293 (DAPPSPPLGAPGLPPAGS) are enriched in pro residues. Positions 301–340 (LAAPPGHQLHWAHYDLRHTFMGVVSLGSPSGEASHPRKTR) are cleaved as a propeptide — connecting peptide. Thr-319 is modified (phosphothreonine). Phosphoserine occurs at positions 325, 328, and 330. Residue Thr-339 is glycosylated (O-linked (GalNAc...) threonine).

It belongs to the fetuin family. Alpha-2-HS glycoprotein derives from this precursor, when the connecting peptide is cleaved off. The two chains A and B are held together by a single disulfide bond. Phosphorylated by FAM20C in the extracellular medium.

It localises to the secreted. Promotes endocytosis, possesses opsonic properties and influences the mineral phase of bone. Shows affinity for calcium and barium ions. The sequence is that of Alpha-2-HS-glycoprotein (AHSG) from Pan troglodytes (Chimpanzee).